Here is a 280-residue protein sequence, read N- to C-terminus: Eukaryotic translation initiation factor 3 subunit F-1 (280 aa).

In terms of domain architecture, MPN spans Val-8–Gly-138.

The protein belongs to the eIF-3 subunit F family. As to quaternary structure, component of the eukaryotic translation initiation factor 3 (eIF-3) complex. The eIF-3 complex interacts with pix.

Its subcellular location is the cytoplasm. Component of the eukaryotic translation initiation factor 3 (eIF-3) complex, which is involved in protein synthesis of a specialized repertoire of mRNAs and, together with other initiation factors, stimulates binding of mRNA and methionyl-tRNAi to the 40S ribosome. The eIF-3 complex specifically targets and initiates translation of a subset of mRNAs involved in cell proliferation. The sequence is that of Eukaryotic translation initiation factor 3 subunit F-1 from Drosophila mojavensis (Fruit fly).